The sequence spans 329 residues: Probable cell division protein WhiA (329 aa).

A DNA-binding region (H-T-H motif) is located at residues S275 to Q308.

It belongs to the WhiA family.

Its function is as follows. Involved in cell division and chromosome segregation. The chain is Probable cell division protein WhiA from Streptomyces griseus subsp. griseus (strain JCM 4626 / CBS 651.72 / NBRC 13350 / KCC S-0626 / ISP 5235).